Consider the following 302-residue polypeptide: UDP-N-acetylenolpyruvoylglucosamine reductase (302 aa).

Residues 27–192 (KVGGAVDYLA…LSAKFALRPG (166 aa)) form the FAD-binding PCMH-type domain. The active site involves R171. The active-site Proton donor is S221. E291 is an active-site residue.

Belongs to the MurB family. Requires FAD as cofactor.

The protein resides in the cytoplasm. The enzyme catalyses UDP-N-acetyl-alpha-D-muramate + NADP(+) = UDP-N-acetyl-3-O-(1-carboxyvinyl)-alpha-D-glucosamine + NADPH + H(+). Its pathway is cell wall biogenesis; peptidoglycan biosynthesis. Functionally, cell wall formation. The protein is UDP-N-acetylenolpyruvoylglucosamine reductase of Streptococcus suis (strain 98HAH33).